The primary structure comprises 476 residues: Cysteine--tRNA ligase (476 aa).

Position 29 (Cys-29) interacts with Zn(2+). Positions 31–41 (PTVYDYTHLGH) match the 'HIGH' region motif. Zn(2+)-binding residues include Cys-209, His-234, and Glu-238. The short motif at 266–270 (KMSKS) is the 'KMSKS' region element. Lys-269 is a binding site for ATP.

Belongs to the class-I aminoacyl-tRNA synthetase family. Zn(2+) serves as cofactor.

Its subcellular location is the cytoplasm. It carries out the reaction tRNA(Cys) + L-cysteine + ATP = L-cysteinyl-tRNA(Cys) + AMP + diphosphate. This chain is Cysteine--tRNA ligase, found in Thermococcus onnurineus (strain NA1).